Consider the following 373-residue polypeptide: Indole glucosinolate O-methyltransferase 1 (373 aa).

S-adenosyl-L-homocysteine contacts are provided by G217, D240, D260, M261, and K274. H278 functions as the Proton acceptor in the catalytic mechanism.

This sequence belongs to the class I-like SAM-binding methyltransferase superfamily. Cation-independent O-methyltransferase family. As to quaternary structure, interacts with B'GAMMA.

It participates in secondary metabolite biosynthesis. In terms of biological role, involved in indole glucosinolate biosynthesis. Catalyzes methoxylation reactions of the glucosinolate indole ring. Converts the hydroxy intermediates 4-hydroxy-indol-3-yl-methylglucosinolate (4OH-I3M) and 1-hydroxy-indol-3-yl-methylglucosinolate (1OH-I3M) to 4-methoxy-indol-3-yl-methylglucosinolate (4MO-I3M) and 1-methoxy-indol-3-yl-methylglucosinolate (1MO-I3M), respectively. This Arabidopsis thaliana (Mouse-ear cress) protein is Indole glucosinolate O-methyltransferase 1.